Reading from the N-terminus, the 330-residue chain is Lactamase-like protein nscB (330 aa).

Positions 97, 99, 101, and 102 each coordinate Zn(2+). Asp-101 serves as the catalytic Proton donor/acceptor.

Belongs to the metallo-beta-lactamase superfamily. Zn(2+) serves as cofactor.

Its pathway is secondary metabolite biosynthesis. In terms of biological role, lactamase-like protein; part of the gene cluster that mediates the biosynthesis of neosartoricin, a prenylated anthracenone that exhibits T-cell antiproliferative activity, suggestive of a physiological role as an immunosuppressive agent. The non-reducing polyketide synthase nscA probably synthesizes and cyclizes the decaketide backbone. The hydrolase nscB then mediates the product release through hydrolysis followed by spontaneous decarboxylation. The prenyltransferase nscD catalyzes the addition of the dimethylallyl group to the aromatic C5. The FAD-dependent monooxygenase nscC is then responsible for the stereospecific hydroxylation at C2. There is no gene encoding O-acetyltransferase in the nsc gene cluster; thus, the last step of 2-O-acetylation leading to neosartoricin may be catalyzed by an unidentified O-acetyltransferase. The chain is Lactamase-like protein nscB from Aspergillus fumigatus (strain ATCC MYA-4609 / CBS 101355 / FGSC A1100 / Af293) (Neosartorya fumigata).